A 303-amino-acid chain; its full sequence is Probable 5-dehydro-4-deoxyglucarate dehydratase (303 aa).

It belongs to the DapA family.

It catalyses the reaction 5-dehydro-4-deoxy-D-glucarate + H(+) = 2,5-dioxopentanoate + CO2 + H2O. The protein operates within carbohydrate acid metabolism; D-glucarate degradation; 2,5-dioxopentanoate from D-glucarate: step 2/2. In Pseudomonas syringae pv. syringae (strain B728a), this protein is Probable 5-dehydro-4-deoxyglucarate dehydratase.